The primary structure comprises 1502 residues: MDLSVIKAASLDLESLPSQPTVSSFQQLRETFIQSKSEDWYLKNGLFFRYYSFLKSSLENATLDGPSQVACLDTISVWLRRIFNACKQDPEISKYVWDTMELKFWTNLFSLPANKISIPGLTGVQVAVKDVFSKSLQLYLLVCPSEDIKNDFLLDSLKHALHWDRHAKVVCTAIQLLVKVTGAEAVFAFQPDFFEQSLKLLKDYSYAQAISSTILTVLTLRFKSLSEETEDREEVETKWMNIWCPIILYEFYGNDRQVQAGMSSFLIPSLLGVSPGITVKFLSRLQNYPNVSKDARDAACLYALKIAKDSKIIKNLDLVKEHAFVKTLFKHPDIKIQLACFRLIALCPNVSSPLSFEDFDCLESNIEFSFNVLDPDSRQILLKSMQDFFIRLRASCHSIARTMRSRHSDKVALSGLLDRAMQFLTSFISVCKKHLYPTCNYQQVLVSLSFLDTLISFGLDDNVESSSIREAQHDFPFSMVIIDRDLSRLMIDRLKDPYDDIRNLCLKILLSYKSLPGFISDSDAYFLFNHGLELLNAVRSHECDGGAKTIYLCNHFMEKSVPGSVLANTKVILNRLKSNIEHAKTSLLEAAVNCPLQGYLIQLTYIFQSLSPTIVKNDNESWKNIVMELIKASETIWGLIKDVLCDDSPEGNLPDGEGEGGIVSNLEDTPAQLILSYSWRSLKETSSLLTVLLTKCLSLFDEEFTPFTLNYYGELMMTWLWEIRHRGAFTSVYPCFIEYCSFLFECNKHEISELPDPWLHKNLSVIQEKSSFITRRSGGIPLSITAILVAGKDKREQLIEQTVISLISIAKQPVEQKNIAGQFDLPQVHAMNTLKTIFTEHRLSSVSVEYLEPAIALSIEGFSHELWPIRNCSVMLFTALINRAFGSKKPKDAVNLGNNKGLSTKMFFSKFPTLHDYLLRELEVSVASLSSNDQPSTGLYPILNMFSRLQYAQPYGNENEWTGLSQFEPLIFKCTASRICKVREIASLSLTCLLDCSKMTTFIVSQLKGVAGLQQNEIHGKLLTIRAVLSCFFSKLTLQQVQEFYEVVPLAFINCFLEFTSSKTSFYAKKLFLEVLNSYFMSNTDSNAKRLQQLRRMTMDYCKRMLLDRKANVTNVFNTIGLPIHQQMAATIFLENLKEFSVYCDAHSIGFLVSKLLHYEFYEVQLTTLRSIVDSPRKKIIVNNPEILQALIKLTPRNQWSQVRALALSLLSDSLNSTSYRLLGISCSDMVSNILSNECLPIKESFIVLLGSCIKQLKTENFLEYKVTFAKWVEILLSYSNEYQPFSSRKAALDSIIHFDLFNAESTAEAFSFEFYILYLLLGDFLNDDDEEIRSLAANHAYQVLGTSAQCVTEIWNLWKLRTKATFGGQHDFQHCINKRLILEDGCELASVQLDNALSRNCSLFERERQNLYYSDNQKLEDLLFYASYPNEKLKDWATDGINAILSRFEDVSRDGPLGKTSDPNVWFTIYKIIRIAEHVHLPLDRVHSLMNRIDGHPSFCQ.

It belongs to the THADA family.

The protein localises to the cytoplasm. It localises to the nucleus. Its function is as follows. Together with methyltransferase trm7, methylates the 2'-O-ribose of nucleotides at position 32 of the anticodon loop of substrate tRNAs. The polypeptide is tRNA (32-2'-O)-methyltransferase regulator trm732 (Schizosaccharomyces pombe (strain 972 / ATCC 24843) (Fission yeast)).